The primary structure comprises 119 residues: Gas vesicle protein O1 (119 aa).

Residues 1 to 12 are compositionally biased toward basic and acidic residues; sequence MADPANDRSERE. Residues 1–48 form a disordered region; the sequence is MADPANDRSEREEGGEDDETPPASDGNPSPSANSFTLSNAQTRAREAA. The segment covering 26–42 has biased composition (polar residues); it reads GNPSPSANSFTLSNAQT.

The protein belongs to the gas vesicle GvpO family. In terms of assembly, forms homodimers, forms a GvpN1-GvpO1 heterodimer, interacts with GvpC1 (via the latter's C-terminus), GvpF1, GvpI1 and GvpL1, might interact with GvpA1.

The protein resides in the gas vesicle. It localises to the cytoplasm. A minor component of the gas vesicle, also found in soluble extracts. May play a role in transcription and/or RNA stability and in GV assembly. Gas vesicles are hollow, gas filled proteinaceous nanostructures found in several microbial planktonic microorganisms. They allow positioning of halobacteria at the optimal depth for growth in the poorly aerated, shallow brine pools of their habitat. Functionally, expression of a 9.5 kb p-vac DNA fragment containing 2 divergently transcribed regions (gvpD-gvpE-gvpF-gvpG-gvpH-gvpI-gvpJ-gvpK-gvpL-gvpM and gvpA-gvpC-gvpN-gvpO) allows H.volcanii to produce gas vesicles. A minimal gas vesicle can be made in H.volcanii by gvpA1-gvpO1 gvpF1-gvpG1-gvpJ1-gvpK1-gvpL1-gvpM1; lack of enough GvpJ1 prevents formation. The same region restores gas vesicle production in H.halobium without the p-vac locus, but it still has the c-vac locus. The polypeptide is Gas vesicle protein O1 (Halobacterium salinarum (strain ATCC 700922 / JCM 11081 / NRC-1) (Halobacterium halobium)).